The following is a 455-amino-acid chain: Bifunctional protein GlmU (455 aa).

The segment at 1–232 (MASITGALIL…DPNLLGVNDP (232 aa)) is pyrophosphorylase. UDP-N-acetyl-alpha-D-glucosamine-binding positions include 10-13 (LAAG), Lys-24, Gln-75, and 80-81 (GT). Residue Asp-106 participates in Mg(2+) binding. Gly-141, Glu-155, Asn-172, and Asn-230 together coordinate UDP-N-acetyl-alpha-D-glucosamine. Asn-230 is a binding site for Mg(2+). Residues 233–253 (AELIRSEALVRARIALNWIEK) are linker. Residues 254 to 455 (RVLIHAPETV…QTTLPRRRNS (202 aa)) form an N-acetyltransferase region. The UDP-N-acetyl-alpha-D-glucosamine site is built by Arg-336 and Lys-354. Catalysis depends on His-366, which acts as the Proton acceptor. Residues Tyr-369 and Asn-380 each coordinate UDP-N-acetyl-alpha-D-glucosamine. Residues Ala-383, 389–390 (NY), Ser-408, Ala-426, and Arg-443 each bind acetyl-CoA.

It in the N-terminal section; belongs to the N-acetylglucosamine-1-phosphate uridyltransferase family. The protein in the C-terminal section; belongs to the transferase hexapeptide repeat family. In terms of assembly, homotrimer. It depends on Mg(2+) as a cofactor.

It is found in the cytoplasm. The enzyme catalyses alpha-D-glucosamine 1-phosphate + acetyl-CoA = N-acetyl-alpha-D-glucosamine 1-phosphate + CoA + H(+). It catalyses the reaction N-acetyl-alpha-D-glucosamine 1-phosphate + UTP + H(+) = UDP-N-acetyl-alpha-D-glucosamine + diphosphate. It functions in the pathway nucleotide-sugar biosynthesis; UDP-N-acetyl-alpha-D-glucosamine biosynthesis; N-acetyl-alpha-D-glucosamine 1-phosphate from alpha-D-glucosamine 6-phosphate (route II): step 2/2. It participates in nucleotide-sugar biosynthesis; UDP-N-acetyl-alpha-D-glucosamine biosynthesis; UDP-N-acetyl-alpha-D-glucosamine from N-acetyl-alpha-D-glucosamine 1-phosphate: step 1/1. The protein operates within bacterial outer membrane biogenesis; LPS lipid A biosynthesis. In terms of biological role, catalyzes the last two sequential reactions in the de novo biosynthetic pathway for UDP-N-acetylglucosamine (UDP-GlcNAc). The C-terminal domain catalyzes the transfer of acetyl group from acetyl coenzyme A to glucosamine-1-phosphate (GlcN-1-P) to produce N-acetylglucosamine-1-phosphate (GlcNAc-1-P), which is converted into UDP-GlcNAc by the transfer of uridine 5-monophosphate (from uridine 5-triphosphate), a reaction catalyzed by the N-terminal domain. In Nitratidesulfovibrio vulgaris (strain DSM 19637 / Miyazaki F) (Desulfovibrio vulgaris), this protein is Bifunctional protein GlmU.